The chain runs to 921 residues: Retinoblastoma-associated protein (921 aa).

2 disordered regions span residues 1–31 (MPPK…PPGG) and 603–634 (RSPK…QKPQ). Residues 612-634 (HPQSGTSNPDAQPSATSQTQKPQ) are compositionally biased toward polar residues. A Bipartite nuclear localization signal motif is present at residues 853-869 (KRSAEPSDAPKPLKRLR). The segment at 873 to 921 (EGQDEADGGKHLPQESKFQQKLAEMTSTRTRMQKQKLNDGNDTSANEEK) is disordered. Residues 910 to 921 (NDGNDTSANEEK) show a composition bias toward polar residues.

The protein belongs to the retinoblastoma protein (RB) family. As to quaternary structure, interacts with and sequesters the E2F1 transcription factor, thereby inhibiting E2F1 transcription. Interacts with SUV39H1, KMT5B and KMT5C. (Microbial infection) Interacts with, and is inhibited by fowl adenovirus 1 protein GAM-1. In terms of processing, phosphorylated in G1, thereby releasing E2F1 which is then able to activate cell growth. Dephosphorylated at the late M phase. Phosphorylation of domain C promotes interaction between the C-terminal domain C and the Pocket domain, and thereby inhibits interactions with heterodimeric E2F/DP transcription factor complexes.

It localises to the nucleus. The protein localises to the cytoplasm. Its function is as follows. Tumor suppressor that is a key regulator of the G1/S transition of the cell cycle. The hypophosphorylated form binds transcription regulators of the E2F family, preventing transcription of E2F-responsive genes. Both physically blocks E2Fs transactivating domain and recruits chromatin-modifying enzymes that actively repress transcription. Cyclin and CDK-dependent phosphorylation of RB1 induces its dissociation from E2Fs, thereby activating transcription of E2F responsive genes and triggering entry into S phase. RB1 also promotes the G0-G1 transition upon phosphorylation and activation by CDK3/cyclin-C. This chain is Retinoblastoma-associated protein (RB1), found in Gallus gallus (Chicken).